Reading from the N-terminus, the 306-residue chain is Putative type I specificity subunit S.MpnORF285P (306 aa).

It belongs to the type-I restriction system S methylase family. In terms of assembly, the methyltransferase is composed of M and S polypeptides.

The specificity (S) subunit of a type I methyltransferase (MTase); this subunit dictates DNA sequence specificity. The single R subunit has multiple frameshifts and is probably not expressed. This Mycoplasma pneumoniae (strain ATCC 29342 / M129 / Subtype 1) (Mycoplasmoides pneumoniae) protein is Putative type I specificity subunit S.MpnORF285P.